The primary structure comprises 159 residues: E3 ubiquitin ligase complex SCF subunit sconC (159 aa).

Residues 101–159 (ILAANYLDIKALLDVGCKTVANMIKGKSPEEIRKTFNIQNDFTPEEEDQIRRENEWAEE) form an interaction with the F-box domain of F-box proteins region.

It belongs to the SKP1 family. In terms of assembly, component of the SCF (SKP1-CUL1-F-box protein) E3 ubiquitin ligase complexes.

It participates in protein modification; protein ubiquitination. Essential component of the SCF (SKP1-CUL1-F-box protein) E3 ubiquitin ligase complexes, which mediate the ubiquitination and subsequent proteasomal degradation of target proteins. Controls sulfur metabolite repression, probably by mediating the inactivation or degradation of the metR transcription factor. The protein is E3 ubiquitin ligase complex SCF subunit sconC (sconC) of Aspergillus clavatus (strain ATCC 1007 / CBS 513.65 / DSM 816 / NCTC 3887 / NRRL 1 / QM 1276 / 107).